We begin with the raw amino-acid sequence, 554 residues long: Glutamine--tRNA ligase (554 aa).

Positions 34 to 44 (PEPNGYLHIGH) match the 'HIGH' region motif. ATP-binding positions include 35-37 (EPN) and 41-47 (HIGHAKS). Positions 67 and 212 each coordinate L-glutamine. Residues threonine 231, 261 to 262 (RL), and 269 to 271 (MSK) contribute to the ATP site. The 'KMSKS' region signature appears at 268-272 (VMSKR). The interaction with tRNA stretch occupies residues 317–324 (TKQDNTIE).

Belongs to the class-I aminoacyl-tRNA synthetase family. In terms of assembly, monomer.

It localises to the cytoplasm. It carries out the reaction tRNA(Gln) + L-glutamine + ATP = L-glutaminyl-tRNA(Gln) + AMP + diphosphate. In Escherichia coli O157:H7, this protein is Glutamine--tRNA ligase.